Consider the following 534-residue polypeptide: Glucose-6-phosphate isomerase (534 aa).

Residue glutamate 356 is the Proton donor of the active site. Active-site residues include histidine 387 and lysine 502.

Belongs to the GPI family.

It localises to the cytoplasm. It carries out the reaction alpha-D-glucose 6-phosphate = beta-D-fructose 6-phosphate. Its pathway is carbohydrate biosynthesis; gluconeogenesis. The protein operates within carbohydrate degradation; glycolysis; D-glyceraldehyde 3-phosphate and glycerone phosphate from D-glucose: step 2/4. In terms of biological role, catalyzes the reversible isomerization of glucose-6-phosphate to fructose-6-phosphate. The chain is Glucose-6-phosphate isomerase from Desulfotalea psychrophila (strain LSv54 / DSM 12343).